The following is a 342-amino-acid chain: Methylthioribose-1-phosphate isomerase (342 aa).

Substrate is bound by residues 49–51, R86, and Q187; that span reads RGA. The active-site Proton donor is D228. 238–239 serves as a coordination point for substrate; that stretch reads NK.

The protein belongs to the eIF-2B alpha/beta/delta subunits family. MtnA subfamily.

It catalyses the reaction 5-(methylsulfanyl)-alpha-D-ribose 1-phosphate = 5-(methylsulfanyl)-D-ribulose 1-phosphate. It participates in amino-acid biosynthesis; L-methionine biosynthesis via salvage pathway; L-methionine from S-methyl-5-thio-alpha-D-ribose 1-phosphate: step 1/6. Catalyzes the interconversion of methylthioribose-1-phosphate (MTR-1-P) into methylthioribulose-1-phosphate (MTRu-1-P). The protein is Methylthioribose-1-phosphate isomerase of Citrobacter koseri (strain ATCC BAA-895 / CDC 4225-83 / SGSC4696).